Here is a 138-residue protein sequence, read N- to C-terminus: Small ribosomal subunit protein uS12 (138 aa).

Residues 33–55 (KEHTNVSSPQKRGVCTRVGTMTP) are disordered. D102 carries the post-translational modification 3-methylthioaspartic acid.

Belongs to the universal ribosomal protein uS12 family. In terms of assembly, part of the 30S ribosomal subunit. Contacts proteins S8 and S17. May interact with IF1 in the 30S initiation complex.

In terms of biological role, with S4 and S5 plays an important role in translational accuracy. Functionally, interacts with and stabilizes bases of the 16S rRNA that are involved in tRNA selection in the A site and with the mRNA backbone. Located at the interface of the 30S and 50S subunits, it traverses the body of the 30S subunit contacting proteins on the other side and probably holding the rRNA structure together. The combined cluster of proteins S8, S12 and S17 appears to hold together the shoulder and platform of the 30S subunit. This Bacillus velezensis (strain DSM 23117 / BGSC 10A6 / LMG 26770 / FZB42) (Bacillus amyloliquefaciens subsp. plantarum) protein is Small ribosomal subunit protein uS12.